The following is a 328-amino-acid chain: Global transcription regulator sge1 (328 aa).

Disordered regions lie at residues 94–120 and 251–293; these read PGEK…PRQR and QMHQ…QYVH. 3 stretches are compositionally biased toward low complexity: residues 106-116, 251-261, and 282-293; these read KSTTQSGGISK, QMHQPQVHQPL, and AHQPQVHQQYVH.

The protein belongs to the MIT1/WOR1 family.

It localises to the nucleus. In terms of biological role, global transcriptional regulator of transcription that impacts, but is not absolutely required for secondary metabolism and pathogenicity on maize. Regulates synthesis of multiple secondary metabolites, including fumonisins and fusarins. In Gibberella moniliformis (strain M3125 / FGSC 7600) (Maize ear and stalk rot fungus), this protein is Global transcription regulator sge1.